A 295-amino-acid polypeptide reads, in one-letter code: Shikimate dehydrogenase (NADP(+)) (295 aa).

Shikimate contacts are provided by residues 22–24 (SLS) and S69. K73 (proton acceptor) is an active-site residue. Positions 94 and 111 each coordinate shikimate. Residues 135–139 (GAGGA) and V236 each bind NADP(+). Y238 is a shikimate binding site. G260 serves as a coordination point for NADP(+).

This sequence belongs to the shikimate dehydrogenase family. In terms of assembly, homodimer.

It carries out the reaction shikimate + NADP(+) = 3-dehydroshikimate + NADPH + H(+). It functions in the pathway metabolic intermediate biosynthesis; chorismate biosynthesis; chorismate from D-erythrose 4-phosphate and phosphoenolpyruvate: step 4/7. Functionally, involved in the biosynthesis of the chorismate, which leads to the biosynthesis of aromatic amino acids. Catalyzes the reversible NADPH linked reduction of 3-dehydroshikimate (DHSA) to yield shikimate (SA). This chain is Shikimate dehydrogenase (NADP(+)), found in Streptococcus uberis (strain ATCC BAA-854 / 0140J).